We begin with the raw amino-acid sequence, 213 residues long: Orotate phosphoribosyltransferase (213 aa).

Lysine 26 is a binding site for 5-phospho-alpha-D-ribose 1-diphosphate. 34-35 (FF) lines the orotate pocket. Residues 72–73 (YK), arginine 99, lysine 100, lysine 103, histidine 105, and 124–132 (DDVITAGTA) contribute to the 5-phospho-alpha-D-ribose 1-diphosphate site. Threonine 128 and arginine 156 together coordinate orotate.

Belongs to the purine/pyrimidine phosphoribosyltransferase family. PyrE subfamily. As to quaternary structure, homodimer. Mg(2+) serves as cofactor.

The enzyme catalyses orotidine 5'-phosphate + diphosphate = orotate + 5-phospho-alpha-D-ribose 1-diphosphate. It participates in pyrimidine metabolism; UMP biosynthesis via de novo pathway; UMP from orotate: step 1/2. In terms of biological role, catalyzes the transfer of a ribosyl phosphate group from 5-phosphoribose 1-diphosphate to orotate, leading to the formation of orotidine monophosphate (OMP). In Pectobacterium carotovorum subsp. carotovorum (strain PC1), this protein is Orotate phosphoribosyltransferase.